We begin with the raw amino-acid sequence, 67 residues long: DNA-directed RNA polymerase subunit omega (67 aa).

Belongs to the RNA polymerase subunit omega family. As to quaternary structure, the RNAP catalytic core consists of 2 alpha, 1 beta, 1 beta' and 1 omega subunit. When a sigma factor is associated with the core the holoenzyme is formed, which can initiate transcription.

It carries out the reaction RNA(n) + a ribonucleoside 5'-triphosphate = RNA(n+1) + diphosphate. Functionally, promotes RNA polymerase assembly. Latches the N- and C-terminal regions of the beta' subunit thereby facilitating its interaction with the beta and alpha subunits. The protein is DNA-directed RNA polymerase subunit omega of Listeria monocytogenes serotype 4a (strain HCC23).